The primary structure comprises 364 residues: Valine dehydrogenase (364 aa).

The active site involves lysine 91. Glycine 191–histidine 197 serves as a coordination point for NAD(+).

This sequence belongs to the Glu/Leu/Phe/Val dehydrogenases family. As to quaternary structure, homodimer.

It localises to the cytoplasm. The enzyme catalyses L-valine + NAD(+) + H2O = 3-methyl-2-oxobutanoate + NH4(+) + NADH + H(+). It functions in the pathway amino-acid degradation; L-valine degradation. Inhibited by pyridoxal 5'-phosphate (PLP). Its function is as follows. Oxidative deamination of branched-chain amino acids. Oxidizes L-valine and L-alpha-aminobutyric acid efficiently, and L-alanine and L-isoleucine less efficiently. D-valine and L-glutamate were not substrates for the enzyme. The catabolism of valine is the major source of fatty acid precursors for macrolide biosynthesis and a vital source of antibiotic precursors. In Streptomyces albus (strain ATCC 21838 / DSM 41398 / FERM P-419 / JCM 4703 / NBRC 107858), this protein is Valine dehydrogenase.